The following is a 269-amino-acid chain: Peptide deformylase 1A, chloroplastic/mitochondrial (269 aa).

A chloroplast and mitochondrion-targeting transit peptide spans 1–60; it reads MGLHRDEATAMETLFRVSLRLLPVSAAVTCRSIRFPVSRPGSSHLLNRKLYNLPTSSSSS. Substrate contacts are provided by residues 123–126 and glycine 187; that span reads PGVG. Cysteine 188 lines the Zn(2+) pocket. Positions 191–196 are dimerization; sequence VDGFRA. Residue histidine 230 participates in Zn(2+) binding. The active site involves glutamate 231. Histidine 234 contributes to the Zn(2+) binding site. The tract at residues 236–254 is dimerization; it reads DGNLYVDKMVPRTFRTVDN.

It belongs to the polypeptide deformylase family. In terms of assembly, homodimer. The cofactor is Zn(2+). Expressed in roots, leaves, flowers and siliques.

It is found in the plastid. It localises to the chloroplast stroma. Its subcellular location is the mitochondrion. It carries out the reaction N-terminal N-formyl-L-methionyl-[peptide] + H2O = N-terminal L-methionyl-[peptide] + formate. With respect to regulation, inhibited by actinonin. Its function is as follows. Removes the formyl group from the N-terminal Met of newly synthesized proteins. The protein is Peptide deformylase 1A, chloroplastic/mitochondrial (PDF1A) of Arabidopsis thaliana (Mouse-ear cress).